Reading from the N-terminus, the 288-residue chain is CBY1-interacting BAR domain-containing protein 1 (288 aa).

The transit peptide at 1 to 47 (MLRRSLENRDAQTRQLQDAVTNVEKHFGELCQIFAAYVRKTARLRDK) directs the protein to the mitochondrion. The interval 10–220 (DAQTRQLQDA…KIDEEEDLEV (211 aa)) is BAR-like. Positions 107–176 (KMKRDDLKAT…ETIDNFEKQK (70 aa)) form a coiled coil. The interval 266 to 288 (RKDHQTEDDDEEDEDLDVTEEEN) is disordered. Over residues 271–288 (TEDDDEEDEDLDVTEEEN) the composition is skewed to acidic residues.

The protein belongs to the CIBAR family. In terms of assembly, homodimer (via BAR-like domain). Heterodimer with FAM92B (via BAR-like domains). Interacts (via BAR-like domain) with CBY1; this interaction is required for targeting FAM92A to centriole and cilium basal body. Interacts (via BAR-like domain) with CBY3; both proteins form a ninefold symmetric structure at the flagellar base; are recruited to the annulus in a mutually dependent manner and regulate annulus positionning.

It is found in the cytoplasm. It localises to the cytoskeleton. The protein localises to the microtubule organizing center. Its subcellular location is the centrosome. The protein resides in the centriole. It is found in the cilium basal body. It localises to the cell projection. The protein localises to the cilium. Its subcellular location is the nucleus. The protein resides in the mitochondrion inner membrane. It is found in the flagellum. In terms of biological role, plays a critical role in regulating mitochondrial ultrastructure and function by maintaining the integrity of mitochondrial morphology, particularly the organization of cristae. Preferentially binds to negatively charged phospholipids like cardiolipin and phosphatidylinositol 4,5-bisphosphate enhancing its interaction with mitochondrial membranes. Induces membrane curvature and tubulation, which are critical for maintaining mitochondrial ultrastructure and the organization of cristae. Plays a crucial role in ciliogenesis. May play a role in limb development through its role in ciliogenesis. Plays a key role in the correct positioning of the annulus, a septin-based ring structure in the sperm flagellum, serving both as a physical barrier and a membrane diffusion barrier that separates the midpiece (MP) from the principal piece (PP). This positioning is essential for proper sperm motility and function. Interacts with CBY3 to form a complex which localizes to the curved membrane region of the flagellar pocket. By doing so, may provide stability and rigidity to the periannular membrane to prevent membrane deformation. This function is crucial for halting annulus migration at the proximal end of the fibrous sheath-containing PP. The polypeptide is CBY1-interacting BAR domain-containing protein 1 (Bos taurus (Bovine)).